The chain runs to 158 residues: Endoribonuclease YbeY (158 aa).

Residues His-119, His-123, and Asp-129 each coordinate Zn(2+).

Belongs to the endoribonuclease YbeY family. The cofactor is Zn(2+).

The protein localises to the cytoplasm. Functionally, single strand-specific metallo-endoribonuclease involved in late-stage 70S ribosome quality control and in maturation of the 3' terminus of the 16S rRNA. In Chlamydia felis (strain Fe/C-56) (Chlamydophila felis), this protein is Endoribonuclease YbeY.